Consider the following 504-residue polypeptide: Maturase K (504 aa).

This sequence belongs to the intron maturase 2 family. MatK subfamily.

Its subcellular location is the plastid. The protein localises to the chloroplast. Its function is as follows. Usually encoded in the trnK tRNA gene intron. Probably assists in splicing its own and other chloroplast group II introns. The sequence is that of Maturase K from Lepidium virginicum (Virginia pepperweed).